The following is a 190-amino-acid chain: Peptidyl-tRNA hydrolase (190 aa).

Position 14 (Tyr-14) interacts with tRNA. His-19 serves as the catalytic Proton acceptor. Residues Tyr-64, Asn-66, and Asn-112 each coordinate tRNA.

It belongs to the PTH family. Monomer.

The protein localises to the cytoplasm. It catalyses the reaction an N-acyl-L-alpha-aminoacyl-tRNA + H2O = an N-acyl-L-amino acid + a tRNA + H(+). Hydrolyzes ribosome-free peptidyl-tRNAs (with 1 or more amino acids incorporated), which drop off the ribosome during protein synthesis, or as a result of ribosome stalling. In terms of biological role, catalyzes the release of premature peptidyl moieties from peptidyl-tRNA molecules trapped in stalled 50S ribosomal subunits, and thus maintains levels of free tRNAs and 50S ribosomes. The protein is Peptidyl-tRNA hydrolase of Chlorobaculum parvum (strain DSM 263 / NCIMB 8327) (Chlorobium vibrioforme subsp. thiosulfatophilum).